The primary structure comprises 119 residues: Protein yippee-like 3 (119 aa).

The Yippee domain occupies 19–116 (RRYSCVHCRA…IELSHMIKDN (98 aa)). Residues Cys-23, Cys-26, Cys-79, and Cys-82 each contribute to the Zn(2+) site.

This sequence belongs to the yippee family.

The protein resides in the nucleus. The protein localises to the nucleolus. Functionally, may be involved in proliferation and apoptosis in myeloid precursor cells. This is Protein yippee-like 3 (ypel3) from Danio rerio (Zebrafish).